The following is a 396-amino-acid chain: 1-deoxy-D-xylulose 5-phosphate reductoisomerase (396 aa).

NADPH is bound by residues T10, G11, S12, I13, G36, K37, N38, and N124. K125 contributes to the 1-deoxy-D-xylulose 5-phosphate binding site. Position 126 (E126) interacts with NADPH. D150 serves as a coordination point for Mn(2+). Residues S151, E152, S186, and H209 each contribute to the 1-deoxy-D-xylulose 5-phosphate site. Residue E152 coordinates Mn(2+). G215 lines the NADPH pocket. 4 residues coordinate 1-deoxy-D-xylulose 5-phosphate: S222, N227, K228, and E231. E231 serves as a coordination point for Mn(2+).

This sequence belongs to the DXR family. Mg(2+) serves as cofactor. Mn(2+) is required as a cofactor.

It catalyses the reaction 2-C-methyl-D-erythritol 4-phosphate + NADP(+) = 1-deoxy-D-xylulose 5-phosphate + NADPH + H(+). The protein operates within isoprenoid biosynthesis; isopentenyl diphosphate biosynthesis via DXP pathway; isopentenyl diphosphate from 1-deoxy-D-xylulose 5-phosphate: step 1/6. Its function is as follows. Catalyzes the NADPH-dependent rearrangement and reduction of 1-deoxy-D-xylulose-5-phosphate (DXP) to 2-C-methyl-D-erythritol 4-phosphate (MEP). This is 1-deoxy-D-xylulose 5-phosphate reductoisomerase from Actinobacillus pleuropneumoniae serotype 5b (strain L20).